The sequence spans 93 residues: Signal recognition particle 19 kDa protein (93 aa).

The protein belongs to the SRP19 family. In terms of assembly, part of the signal recognition particle protein translocation system, which is composed of SRP and FtsY. Archaeal SRP consists of a 7S RNA molecule of 300 nucleotides and two protein subunits: SRP54 and SRP19.

It is found in the cytoplasm. Functionally, involved in targeting and insertion of nascent membrane proteins into the cytoplasmic membrane. Binds directly to 7S RNA and mediates binding of the 54 kDa subunit of the SRP. The sequence is that of Signal recognition particle 19 kDa protein from Haloquadratum walsbyi (strain DSM 16790 / HBSQ001).